A 205-amino-acid polypeptide reads, in one-letter code: Large ribosomal subunit protein uL4 (205 aa).

This sequence belongs to the universal ribosomal protein uL4 family. In terms of assembly, part of the 50S ribosomal subunit. Contacts proteins L15 and L34.

Functionally, one of the primary rRNA binding proteins, this protein initially binds near the 5'-end of the 23S rRNA. It is important during the early stages of 50S assembly. In terms of biological role, makes multiple contacts with different domains of the 23S rRNA in the assembled 50S subunit. Its function is as follows. This protein is located close to the polypeptide exit tunnel, and interacts with the modified macrolide azithromycin, which blocks the tunnel. The polypeptide is Large ribosomal subunit protein uL4 (rplD) (Deinococcus radiodurans (strain ATCC 13939 / DSM 20539 / JCM 16871 / CCUG 27074 / LMG 4051 / NBRC 15346 / NCIMB 9279 / VKM B-1422 / R1)).